Here is a 311-residue protein sequence, read N- to C-terminus: Probable manganese-dependent inorganic pyrophosphatase (311 aa).

Mn(2+) contacts are provided by His-9, Asp-13, Asp-15, Asp-77, His-99, and Asp-151.

It belongs to the PPase class C family. Requires Mn(2+) as cofactor.

It is found in the cytoplasm. The enzyme catalyses diphosphate + H2O = 2 phosphate + H(+). This Streptococcus agalactiae serotype III (strain NEM316) protein is Probable manganese-dependent inorganic pyrophosphatase.